The chain runs to 29 residues: Cytochrome b6-f complex subunit 8 (29 aa).

The chain crosses the membrane as a helical span at residues 3–23; that stretch reads ILTLGWVSVLTLFTYSIAMVV.

It belongs to the PetN family. As to quaternary structure, the 4 large subunits of the cytochrome b6-f complex are cytochrome b6, subunit IV (17 kDa polypeptide, PetD), cytochrome f and the Rieske protein, while the 4 small subunits are PetG, PetL, PetM and PetN. The complex functions as a dimer.

It localises to the cellular thylakoid membrane. Component of the cytochrome b6-f complex, which mediates electron transfer between photosystem II (PSII) and photosystem I (PSI), cyclic electron flow around PSI, and state transitions. In Acaryochloris marina (strain MBIC 11017), this protein is Cytochrome b6-f complex subunit 8.